A 189-amino-acid polypeptide reads, in one-letter code: Potassium-transporting ATPase KdpC subunit (189 aa).

A helical transmembrane segment spans residues 11–31 (LFVLLTVITGVLYPVFVTGLA).

It belongs to the KdpC family. As to quaternary structure, the system is composed of three essential subunits: KdpA, KdpB and KdpC.

The protein resides in the cell inner membrane. Its function is as follows. Part of the high-affinity ATP-driven potassium transport (or Kdp) system, which catalyzes the hydrolysis of ATP coupled with the electrogenic transport of potassium into the cytoplasm. This subunit acts as a catalytic chaperone that increases the ATP-binding affinity of the ATP-hydrolyzing subunit KdpB by the formation of a transient KdpB/KdpC/ATP ternary complex. The protein is Potassium-transporting ATPase KdpC subunit of Polynucleobacter asymbioticus (strain DSM 18221 / CIP 109841 / QLW-P1DMWA-1) (Polynucleobacter necessarius subsp. asymbioticus).